The primary structure comprises 179 residues: Large ribosomal subunit protein uL6 (179 aa).

This sequence belongs to the universal ribosomal protein uL6 family. As to quaternary structure, part of the 50S ribosomal subunit.

Its function is as follows. This protein binds to the 23S rRNA, and is important in its secondary structure. It is located near the subunit interface in the base of the L7/L12 stalk, and near the tRNA binding site of the peptidyltransferase center. In Mycobacterium tuberculosis (strain ATCC 25618 / H37Rv), this protein is Large ribosomal subunit protein uL6.